A 298-amino-acid polypeptide reads, in one-letter code: Probable pyridoxal 5'-phosphate synthase subunit SNZ3 (298 aa).

Asp21 provides a ligand contact to D-ribose 5-phosphate. Lys78 serves as the catalytic Schiff-base intermediate with D-ribose 5-phosphate. D-ribose 5-phosphate-binding positions include Gly150, Gly213, and 234-235 (GS).

The protein belongs to the PdxS/SNZ family. As to quaternary structure, homohexamer. Interacts with THI11.

The catalysed reaction is aldehydo-D-ribose 5-phosphate + D-glyceraldehyde 3-phosphate + L-glutamine = pyridoxal 5'-phosphate + L-glutamate + phosphate + 3 H2O + H(+). It functions in the pathway cofactor biosynthesis; pyridoxal 5'-phosphate biosynthesis. Catalyzes the formation of pyridoxal 5'-phosphate from ribose 5-phosphate (RBP), glyceraldehyde 3-phosphate (G3P) and ammonia. The ammonia is provided by a SNO isoform. Can also use ribulose 5-phosphate and dihydroxyacetone phosphate as substrates, resulting from enzyme-catalyzed isomerization of RBP and G3P, respectively. The protein is Probable pyridoxal 5'-phosphate synthase subunit SNZ3 (SNZ3) of Saccharomyces cerevisiae (strain ATCC 204508 / S288c) (Baker's yeast).